The primary structure comprises 178 residues: Disulfide bond formation protein B (178 aa).

At 1–16 (MTIFSSLNQFSKGHVS) the chain is on the cytoplasmic side. Residues 17–33 (WLLLLLFIIFFEACALY) traverse the membrane as a helical segment. The Periplasmic segment spans residues 34–51 (FQHVMMLAPCVMCIYERV). Residues Cys43 and Cys46 are joined by a disulfide bond. Residues 52 to 67 (AMMGIGGAAIIGLIAP) form a helical membrane-spanning segment. Residues 68-74 (NNALFRW) are Cytoplasmic-facing. Residues 75 to 92 (LGLIGWGLSSYKGLMLAM) form a helical membrane-spanning segment. At 93–147 (QHVDYQFNPSPFATCDLFVTFPSWAPLNQWVPWMFEAYGDCSKIVWQFFDLSMPQ) the chain is on the periplasmic side. The cysteines at positions 107 and 133 are disulfide-linked. The helical transmembrane segment at 148–166 (WLVVIFAGNLVALALIVIA) threads the bilayer. Residues 167–178 (QFFPVKRKNPIR) lie on the Cytoplasmic side of the membrane.

The protein belongs to the DsbB family.

The protein localises to the cell inner membrane. In terms of biological role, required for disulfide bond formation in some periplasmic proteins. Acts by oxidizing the DsbA protein. The polypeptide is Disulfide bond formation protein B (Vibrio parahaemolyticus serotype O3:K6 (strain RIMD 2210633)).